We begin with the raw amino-acid sequence, 62 residues long: Large ribosomal subunit protein uL29 (62 aa).

Belongs to the universal ribosomal protein uL29 family.

The polypeptide is Large ribosomal subunit protein uL29 (Geotalea daltonii (strain DSM 22248 / JCM 15807 / FRC-32) (Geobacter daltonii)).